The primary structure comprises 79 residues: Acyl carrier protein (79 aa).

The Carrier domain occupies 2 to 77 (ENIEQRVKKI…QAIDYVTAHL (76 aa)). Position 37 is an O-(pantetheine 4'-phosphoryl)serine (S37).

This sequence belongs to the acyl carrier protein (ACP) family. 4'-phosphopantetheine is transferred from CoA to a specific serine of apo-ACP by AcpS. This modification is essential for activity because fatty acids are bound in thioester linkage to the sulfhydryl of the prosthetic group.

Its subcellular location is the cytoplasm. It functions in the pathway lipid metabolism; fatty acid biosynthesis. Functionally, carrier of the growing fatty acid chain in fatty acid biosynthesis. The protein is Acyl carrier protein of Aromatoleum aromaticum (strain DSM 19018 / LMG 30748 / EbN1) (Azoarcus sp. (strain EbN1)).